The primary structure comprises 404 residues: ATP phosphoribosyltransferase regulatory subunit (404 aa).

The protein belongs to the class-II aminoacyl-tRNA synthetase family. HisZ subfamily. Heteromultimer composed of HisG and HisZ subunits.

Its subcellular location is the cytoplasm. Its pathway is amino-acid biosynthesis; L-histidine biosynthesis; L-histidine from 5-phospho-alpha-D-ribose 1-diphosphate: step 1/9. Required for the first step of histidine biosynthesis. May allow the feedback regulation of ATP phosphoribosyltransferase activity by histidine. This is ATP phosphoribosyltransferase regulatory subunit from Picosynechococcus sp. (strain ATCC 27264 / PCC 7002 / PR-6) (Agmenellum quadruplicatum).